The chain runs to 686 residues: X-linked interleukin-1 receptor accessory protein-like 2 (686 aa).

The N-terminal stretch at 1–16 is a signal peptide; that stretch reads MKPPFLLALVVCSVVS. Residues 17–354 are Extracellular-facing; it reads TNLKMVSKRN…LLRKKDLIYK (338 aa). In terms of domain architecture, Ig-like C2-type 1 spans 18-132; sequence NLKMVSKRNS…YCMKVSMSLT (115 aa). An intrachain disulfide couples C53 to C116. 5 N-linked (GlcNAc...) asparagine glycosylation sites follow: N63, N120, N136, N211, and N328. Ig-like C2-type domains lie at 141 to 232 and 239 to 347; these read CYNS…LKVT and PPKP…VLLR. 2 cysteine pairs are disulfide-bonded: C162/C214 and C265/C331. A helical membrane pass occupies residues 355–375; that stretch reads IELAGGLGAIFLLLVLLVVIY. The Cytoplasmic portion of the chain corresponds to 376-686; that stretch reads KCYNIELMLF…KELSFTSDIW (311 aa). Residues 400–556 form the TIR domain; that stretch reads KEYDAYLSYT…KFWKHLVYEM (157 aa). E488 is a catalytic residue.

This sequence belongs to the interleukin-1 receptor family. In terms of tissue distribution, detected at low levels in fetal and adult brain, in particular in the frontal lobe, temporal lobe and cerebellum. Detected at very low levels in skin, liver, fetal ovary and in placenta.

The protein localises to the membrane. It carries out the reaction NAD(+) + H2O = ADP-D-ribose + nicotinamide + H(+). The polypeptide is X-linked interleukin-1 receptor accessory protein-like 2 (IL1RAPL2) (Homo sapiens (Human)).